A 109-amino-acid polypeptide reads, in one-letter code: Large ribosomal subunit protein uL24 (109 aa).

Belongs to the universal ribosomal protein uL24 family. Part of the 50S ribosomal subunit.

In terms of biological role, one of two assembly initiator proteins, it binds directly to the 5'-end of the 23S rRNA, where it nucleates assembly of the 50S subunit. Its function is as follows. One of the proteins that surrounds the polypeptide exit tunnel on the outside of the subunit. The sequence is that of Large ribosomal subunit protein uL24 from Ehrlichia chaffeensis (strain ATCC CRL-10679 / Arkansas).